The primary structure comprises 423 residues: Dihydroorotase (423 aa).

Zn(2+) contacts are provided by H56 and H58. Substrate-binding positions include 58-60 (HFR) and N89. Zn(2+) is bound by residues K137, H168, H227, and D302. At K137 the chain carries N6-carboxylysine. Residue D302 is part of the active site. H306 is a binding site for substrate.

It belongs to the metallo-dependent hydrolases superfamily. DHOase family. Class I DHOase subfamily. Zn(2+) serves as cofactor.

The enzyme catalyses (S)-dihydroorotate + H2O = N-carbamoyl-L-aspartate + H(+). The protein operates within pyrimidine metabolism; UMP biosynthesis via de novo pathway; (S)-dihydroorotate from bicarbonate: step 3/3. In terms of biological role, catalyzes the reversible cyclization of carbamoyl aspartate to dihydroorotate. The polypeptide is Dihydroorotase (Methanocaldococcus jannaschii (strain ATCC 43067 / DSM 2661 / JAL-1 / JCM 10045 / NBRC 100440) (Methanococcus jannaschii)).